Here is a 328-residue protein sequence, read N- to C-terminus: Tetraacyldisaccharide 4'-kinase (328 aa).

An ATP-binding site is contributed by 55–62 (TAGGNGKT).

Belongs to the LpxK family.

The enzyme catalyses a lipid A disaccharide + ATP = a lipid IVA + ADP + H(+). The protein operates within glycolipid biosynthesis; lipid IV(A) biosynthesis; lipid IV(A) from (3R)-3-hydroxytetradecanoyl-[acyl-carrier-protein] and UDP-N-acetyl-alpha-D-glucosamine: step 6/6. Its function is as follows. Transfers the gamma-phosphate of ATP to the 4'-position of a tetraacyldisaccharide 1-phosphate intermediate (termed DS-1-P) to form tetraacyldisaccharide 1,4'-bis-phosphate (lipid IVA). This chain is Tetraacyldisaccharide 4'-kinase, found in Escherichia coli O127:H6 (strain E2348/69 / EPEC).